A 126-amino-acid polypeptide reads, in one-letter code: Fumarate reductase subunit C (126 aa).

The next 3 membrane-spanning stretches (helical) occupy residues 30–50, 64–84, and 105–125; these read IFVA…GAGG, VVVV…VTWF, and VLAG…WMVL.

Belongs to the FrdC family. In terms of assembly, part of an enzyme complex containing four subunits: a flavoprotein (FrdA), an iron-sulfur protein (FrdB), and two hydrophobic anchor proteins (FrdC and FrdD).

It is found in the cell membrane. Functionally, anchors the catalytic components of the fumarate reductase complex to the cell membrane, binds quinones. The polypeptide is Fumarate reductase subunit C (Mycobacterium tuberculosis (strain ATCC 25177 / H37Ra)).